The primary structure comprises 72 residues: Dermaseptin AA-3-4 (72 aa).

The N-terminal stretch at 1–22 (MAFLKKSLFLVLFLGLVSLSIC) is a signal peptide. A propeptide spanning residues 23-43 (DEEKRENEDEEEQEDDEQSEE) is cleaved from the precursor. The tract at residues 24 to 45 (EEKRENEDEEEQEDDEQSEEKR) is disordered. Residues 30–41 (EDEEEQEDDEQS) show a composition bias toward acidic residues.

Belongs to the frog skin active peptide (FSAP) family. As to expression, expressed by the skin glands.

Its subcellular location is the secreted. Its function is as follows. Possesses a potent antimicrobial activity against Gram-positive and Gram-negative bacteria. Probably acts by disturbing membrane functions with its amphipathic structure. In Agalychnis annae (Blue-sided leaf frog), this protein is Dermaseptin AA-3-4.